We begin with the raw amino-acid sequence, 513 residues long: Serine/threonine-protein kinase ppk8 (513 aa).

Over residues 98–114 (LSSTLTSMSEESSSTES) the composition is skewed to low complexity. The disordered stretch occupies residues 98–120 (LSSTLTSMSEESSSTESKFATLN). The region spanning 241–505 (GKLNNVIGEG…ISGARSTTWM (265 aa)) is the Protein kinase domain. ATP contacts are provided by residues 247 to 255 (IGEGASSFI) and Lys-270. The active-site Proton acceptor is the Asp-364.

This sequence belongs to the protein kinase superfamily. Ser/Thr protein kinase family.

The protein localises to the cytoplasm. It localises to the nucleus. The catalysed reaction is L-seryl-[protein] + ATP = O-phospho-L-seryl-[protein] + ADP + H(+). It carries out the reaction L-threonyl-[protein] + ATP = O-phospho-L-threonyl-[protein] + ADP + H(+). The polypeptide is Serine/threonine-protein kinase ppk8 (ppk8) (Schizosaccharomyces pombe (strain 972 / ATCC 24843) (Fission yeast)).